The primary structure comprises 231 residues: Large ribosomal subunit protein uL1 (231 aa).

This sequence belongs to the universal ribosomal protein uL1 family. As to quaternary structure, part of the 50S ribosomal subunit.

In terms of biological role, binds directly to 23S rRNA. The L1 stalk is quite mobile in the ribosome, and is involved in E site tRNA release. Protein L1 is also a translational repressor protein, it controls the translation of the L11 operon by binding to its mRNA. The polypeptide is Large ribosomal subunit protein uL1 (Paracidovorax citrulli (strain AAC00-1) (Acidovorax citrulli)).